The primary structure comprises 112 residues: K(+)/H(+) antiporter modulator KhtS (112 aa).

The segment at 42 to 64 (YVPMSSYPQETQSAKTPSPGSMH) is disordered. Over residues 47–60 (SYPQETQSAKTPSP) the composition is skewed to polar residues.

It is found in the cell membrane. Modulates the activity of the potassium/proton antiporter KhtU. Involved in protection of the cell from methylglyoxal, a toxic by-product of glycolysis. This is K(+)/H(+) antiporter modulator KhtS from Bacillus subtilis (strain 168).